The sequence spans 503 residues: Glutamate--tRNA ligase (503 aa).

The 'HIGH' region motif lies at 9–19 (PSPTGDPHVGT). The 'KMSKS' region motif lies at 251 to 255 (KLSKR). Residue lysine 254 participates in ATP binding.

Belongs to the class-I aminoacyl-tRNA synthetase family. Glutamate--tRNA ligase type 1 subfamily. In terms of assembly, monomer.

The protein resides in the cytoplasm. The enzyme catalyses tRNA(Glu) + L-glutamate + ATP = L-glutamyl-tRNA(Glu) + AMP + diphosphate. Functionally, catalyzes the attachment of glutamate to tRNA(Glu) in a two-step reaction: glutamate is first activated by ATP to form Glu-AMP and then transferred to the acceptor end of tRNA(Glu). The sequence is that of Glutamate--tRNA ligase from Saccharophagus degradans (strain 2-40 / ATCC 43961 / DSM 17024).